A 751-amino-acid polypeptide reads, in one-letter code: uncharacterized protein (751 aa).

Residues 73–169 (FGVVHSHTPK…PVLIDDDTGE (97 aa)) form a disordered region. Over residues 96–109 (ATSTRRSATAQRAA) the composition is skewed to low complexity. Positions 111 to 120 (LKSSPVDQWS) are enriched in polar residues.

This is an uncharacterized protein from Invertebrate iridescent virus 3 (IIV-3).